The chain runs to 250 residues: DNA repair protein RecO (250 aa).

It belongs to the RecO family.

Its function is as follows. Involved in DNA repair and RecF pathway recombination. The sequence is that of DNA repair protein RecO from Rhodospirillum centenum (strain ATCC 51521 / SW).